Reading from the N-terminus, the 670-residue chain is NADH-ubiquinone oxidoreductase chain 5 (670 aa).

19 consecutive transmembrane segments (helical) span residues 1–21 (MYIV…IFGH), 31–51 (IAVG…YEIL), 81–101 (LTSI…LYSM), 111–131 (TRFF…VTAD), 133–153 (FVQL…LINF), 178–198 (LFFG…SVIF), 211–231 (LLGY…IGVV), 251–271 (TPVS…FLVL), 283–303 (ILNI…TIGI), 311–331 (VIAY…GLLN), 339–359 (LTTH…VIHG), 375–395 (LMPL…GFPF), 421–441 (AIIG…LLIL), 462–482 (TNMV…GYVT), 519–539 (LLPL…YFNI), 566–586 (FDFL…YDVM), 594–614 (LWEK…FTAL), 629–649 (IVQT…TGFI), and 650–670 (YMEL…IKID).

Belongs to the complex I subunit 5 family.

The protein localises to the mitochondrion inner membrane. It catalyses the reaction a ubiquinone + NADH + 5 H(+)(in) = a ubiquinol + NAD(+) + 4 H(+)(out). Core subunit of the mitochondrial membrane respiratory chain NADH dehydrogenase (Complex I) that is believed to belong to the minimal assembly required for catalysis. Complex I functions in the transfer of electrons from NADH to the respiratory chain. The immediate electron acceptor for the enzyme is believed to be ubiquinone. The protein is NADH-ubiquinone oxidoreductase chain 5 (nad5) of Dictyostelium discoideum (Social amoeba).